We begin with the raw amino-acid sequence, 642 residues long: Threonine--tRNA ligase (642 aa).

In terms of domain architecture, TGS spans methionine 1–threonine 61. Positions aspartate 243 to proline 534 are catalytic. Zn(2+) contacts are provided by cysteine 334, histidine 385, and histidine 511.

The protein belongs to the class-II aminoacyl-tRNA synthetase family. As to quaternary structure, homodimer. Zn(2+) serves as cofactor.

The protein localises to the cytoplasm. It carries out the reaction tRNA(Thr) + L-threonine + ATP = L-threonyl-tRNA(Thr) + AMP + diphosphate + H(+). Functionally, catalyzes the attachment of threonine to tRNA(Thr) in a two-step reaction: L-threonine is first activated by ATP to form Thr-AMP and then transferred to the acceptor end of tRNA(Thr). Also edits incorrectly charged L-seryl-tRNA(Thr). In Salmonella gallinarum (strain 287/91 / NCTC 13346), this protein is Threonine--tRNA ligase.